An 84-amino-acid chain; its full sequence is uncharacterized protein (84 aa).

This is an uncharacterized protein from Caenorhabditis elegans.